A 254-amino-acid polypeptide reads, in one-letter code: Anti-sigma-M factor RsmA (254 aa).

Residues 1–112 (MSAADKDPDK…AARPHVHPVR (112 aa)) lie on the Cytoplasmic side of the membrane. A helical membrane pass occupies residues 113–133 (MIAGAAGLCAVATAIGVGAVV). Residues 134–254 (DAPPPAPSAP…LLASTVVPRA (121 aa)) are Extracellular-facing.

As to quaternary structure, interacts with ECF RNA polymerase sigma factor SigM; this should inhibit the interaction of SigM with the RNA polymerase catalytic core. Probably cleaved within the membrane by Rip1 near the cytoplasmic membrane interface.

It is found in the cell membrane. Its function is as follows. An anti-sigma factor for extracytoplasmic function (ECF) sigma factor SigM. ECF sigma factors are held in an inactive form by an anti-sigma factor until released by regulated intramembrane proteolysis (RIP). RIP occurs when an extracytoplasmic signal triggers a concerted proteolytic cascade to transmit information and elicit cellular responses. The membrane-spanning regulatory substrate protein is first cut extracytoplasmically (site-1 protease, S1P), then within the membrane itself (site-2 protease, S2P, Rip1), while cytoplasmic proteases finish degrading the regulatory protein, liberating the sigma factor. This chain is Anti-sigma-M factor RsmA (rsmA), found in Mycobacterium tuberculosis (strain ATCC 35801 / TMC 107 / Erdman).